We begin with the raw amino-acid sequence, 505 residues long: Pleckstrin homology domain-containing family D member 1 (505 aa).

The PH domain occupies 28 to 136 (KVQLYGVLWK…WLEMLQESGK (109 aa)). The stretch at 146–391 (EAMIKSLEAQ…KVRNKEKEER (246 aa)) forms a coiled coil. Positions 264-284 (DKNQPQPLTNQSEQPPATDGL) are disordered. A compositionally biased stretch (polar residues) spans 267-278 (QPQPLTNQSEQP). Arg-502 carries the post-translational modification Omega-N-methylarginine.

The protein belongs to the PLEKHD1 family.

In Rattus norvegicus (Rat), this protein is Pleckstrin homology domain-containing family D member 1 (Plekhd1).